The chain runs to 437 residues: Isthmin-2 (437 aa).

Residues 1–25 (MLRARKGLWVLLSVLLAFWIERAIS) form the signal peptide. The tract at residues 156-191 (DSGEDGTGQAEDEEDDYDYDSGEPIPSGLGKTDGDW) is disordered. The segment covering 165–176 (AEDEEDDYDYDS) has biased composition (acidic residues). The region spanning 197–242 (EEKEEEWSTWSPCSVTCGHGNQTRSRSCGDFCTSTESQSCDLVPCP) is the TSP type-1 domain. Cystine bridges form between Cys-209-Cys-236, Cys-213-Cys-241, and Cys-224-Cys-228. N-linked (GlcNAc...) asparagine glycosylation occurs at Asn-217. N-linked (GlcNAc...) asparagine glycans are attached at residues Asn-258 and Asn-349. An AMOP domain is found at 262–425 (PYGTDVGSCE…LHCMENPQQD (164 aa)).

It belongs to the isthmin family.

The protein localises to the secreted. This chain is Isthmin-2 (ism2), found in Danio rerio (Zebrafish).